The primary structure comprises 383 residues: Probable mannan endo-1,4-beta-mannosidase A (383 aa).

An N-terminal signal peptide occupies residues 1 to 21 (MKLSNALLTLASLALANVSTA). N17 carries N-linked (GlcNAc...) asparagine glycosylation. Position 92 (W92) interacts with substrate. A glycan (N-linked (GlcNAc...) asparagine) is linked at N194. N205 lines the substrate pocket. E206 acts as the Proton donor in catalysis. A glycan (N-linked (GlcNAc...) asparagine) is linked at N263. Position 281 (Y281) interacts with substrate. Residue E314 is the Nucleophile of the active site. W344 contributes to the substrate binding site.

This sequence belongs to the glycosyl hydrolase 5 (cellulase A) family.

It localises to the secreted. The catalysed reaction is Random hydrolysis of (1-&gt;4)-beta-D-mannosidic linkages in mannans, galactomannans and glucomannans.. In terms of biological role, endo-1,4-mannanase, a crucial enzyme for depolymerization of seed galactomannans and wood galactoglucomannans. In Aspergillus niger (strain ATCC MYA-4892 / CBS 513.88 / FGSC A1513), this protein is Probable mannan endo-1,4-beta-mannosidase A (manA).